Here is a 247-residue protein sequence, read N- to C-terminus: Chymase (247 aa).

The N-terminal stretch at 1-19 is a signal peptide; that stretch reads MLLLPLPLLLFFLCSRAEA. A propeptide spans 20–21 (activation peptide); the sequence is GE. The 224-residue stretch at 22-245 folds into the Peptidase S1 domain; the sequence is IIGGTECKPH…YRPWINKILQ (224 aa). Cys51 and Cys67 form a disulfide bridge. The active-site Charge relay system is His66. Asn80 and Asn103 each carry an N-linked (GlcNAc...) asparagine glycan. The Charge relay system role is filled by Asp110. Cystine bridges form between Cys144-Cys209 and Cys175-Cys188. Ser203 serves as the catalytic Charge relay system.

This sequence belongs to the peptidase S1 family. Granzyme subfamily.

The protein localises to the secreted. It is found in the cytoplasmic granule. The catalysed reaction is Preferential cleavage: Phe-|-Xaa &gt; Tyr-|-Xaa &gt; Trp-|-Xaa &gt; Leu-|-Xaa.. Functionally, major secreted protease of mast cells with suspected roles in vasoactive peptide generation, extracellular matrix degradation, and regulation of gland secretion. The sequence is that of Chymase (CMA1) from Macaca fascicularis (Crab-eating macaque).